Reading from the N-terminus, the 132-residue chain is Keratin, high-sulfur matrix protein, IIIA3 (132 aa).

The keratin products of mammalian epidermal derivatives such as wool and hair consist of microfibrils embedded in a rigid matrix of other proteins. The matrix proteins include the high-sulfur and high-tyrosine keratins, having molecular weights of 6-20 kDa, whereas the microfibrils contain the larger, low-sulfur keratins (40-56 kDa). This chain is Keratin, high-sulfur matrix protein, IIIA3, found in Capra hircus (Goat).